Here is a 389-residue protein sequence, read N- to C-terminus: Aspartic protease pepA (389 aa).

Residues 1 to 20 (MVLINQLGAVLAVCATLTVA) form the signal peptide. Residues 21–67 (APTKGKARFNVPQVAIPKKMVHHPAVSYARALHKFGMKVPKTVQDAA) constitute a propeptide, activation peptide. Residues 82-386 (YVTQVTVGEG…DTQGPRIGFA (305 aa)) form the Peptidase A1 domain. Asp-98 is an active-site residue. N-linked (GlcNAc...) asparagine glycosylation is present at Asn-257. Asp-279 is an active-site residue. Residues Cys-315 and Cys-348 are joined by a disulfide bond.

The protein belongs to the peptidase A1 family. As to quaternary structure, monomer.

The protein resides in the secreted. Secreted aspartic endopeptidase that allows assimilation of proteinaceous substrates. The scissile peptide bond is attacked by a nucleophilic water molecule activated by two aspartic residues in the active site. Shows a broad primary substrate specificity. Favors hydrophobic residues at the P1 and P1' positions. The polypeptide is Aspartic protease pepA (Arthroderma otae (strain ATCC MYA-4605 / CBS 113480) (Microsporum canis)).